The following is a 440-amino-acid chain: Elongation factor 1-alpha (440 aa).

In terms of domain architecture, tr-type G spans 5-228 (KPHINLVVIG…ALDTYIQPPK (224 aa)). Residues 14 to 21 (GHVDHGKS) are G1. 14 to 21 (GHVDHGKS) contributes to the GTP binding site. Ser21 provides a ligand contact to Mg(2+). Positions 70–74 (GVTID) are G2. The G3 stretch occupies residues 91 to 94 (DAPG). GTP-binding positions include 91 to 95 (DAPGH) and 153 to 156 (NKMD). The segment at 153 to 156 (NKMD) is G4. Residues 194–196 (SAW) are G5.

The protein belongs to the TRAFAC class translation factor GTPase superfamily. Classic translation factor GTPase family. EF-Tu/EF-1A subfamily.

The protein localises to the cytoplasm. The catalysed reaction is GTP + H2O = GDP + phosphate + H(+). Functionally, GTP hydrolase that promotes the GTP-dependent binding of aminoacyl-tRNA to the A-site of ribosomes during protein biosynthesis. The protein is Elongation factor 1-alpha of Hyperthermus butylicus (strain DSM 5456 / JCM 9403 / PLM1-5).